A 503-amino-acid chain; its full sequence is Cytochrome P450 3A12 (503 aa).

Cys-442 contacts heme.

Belongs to the cytochrome P450 family. Requires heme as cofactor.

The protein localises to the endoplasmic reticulum membrane. It is found in the microsome membrane. The catalysed reaction is an organic molecule + reduced [NADPH--hemoprotein reductase] + O2 = an alcohol + oxidized [NADPH--hemoprotein reductase] + H2O + H(+). Its function is as follows. Cytochromes P450 are a group of heme-thiolate monooxygenases. In liver microsomes, this enzyme is involved in an NADPH-dependent electron transport pathway. It oxidizes a variety of structurally unrelated compounds, including steroids, fatty acids, and xenobiotics. The sequence is that of Cytochrome P450 3A12 (CYP3A12) from Canis lupus familiaris (Dog).